The sequence spans 206 residues: Large ribosomal subunit protein uL4 (206 aa).

The segment at 62–85 is disordered; that stretch reads KPWRQKGTGRARQGSTRSPQFRGG.

It belongs to the universal ribosomal protein uL4 family. In terms of assembly, part of the 50S ribosomal subunit.

Functionally, one of the primary rRNA binding proteins, this protein initially binds near the 5'-end of the 23S rRNA. It is important during the early stages of 50S assembly. It makes multiple contacts with different domains of the 23S rRNA in the assembled 50S subunit and ribosome. In terms of biological role, forms part of the polypeptide exit tunnel. This Rhodospirillum centenum (strain ATCC 51521 / SW) protein is Large ribosomal subunit protein uL4.